A 193-amino-acid polypeptide reads, in one-letter code: Pilin-like protein PilA2 (193 aa).

The propeptide at 1–4 is leader sequence; sequence MRKG. N-methylleucine is present on L5. The chain crosses the membrane as a helical span at residues 5–25; it reads LTLVEVLVTLVIMGIAFAALL.

It localises to the cell inner membrane. Its subcellular location is the cell outer membrane. It is found in the periplasm. Plays an essential role in natural DNA transformation but is not required for pilus biogenesis. This is Pilin-like protein PilA2 (pilA2) from Thermus thermophilus (strain ATCC BAA-163 / DSM 7039 / HB27).